A 206-amino-acid polypeptide reads, in one-letter code: Superoxide dismutase [Mn] (206 aa).

Residues H27, H82, D168, and H172 each contribute to the Mn(2+) site.

It belongs to the iron/manganese superoxide dismutase family. As to quaternary structure, homodimer. It depends on Mn(2+) as a cofactor.

The enzyme catalyses 2 superoxide + 2 H(+) = H2O2 + O2. Functionally, destroys superoxide anion radicals which are normally produced within the cells and which are toxic to biological systems. The protein is Superoxide dismutase [Mn] (sodA) of Salmonella typhi.